A 234-amino-acid polypeptide reads, in one-letter code: MGLTFFDKARELTEELEKTQAESIHQAAKLVADSIMNDGIIQAFGSGHSYAAAIEVCGRAGGLIPSKVIMDPAGGYYESIEGVGSLLTHRLQAKPNDIFFLISNSGRNPMGIELAEWIKSQGCKLIVVTALDASQTAASRHSSGKLLYEFADVILDNRSVQGDAALELEGLEGKVCGTSSFSAVLLLQQTIYEAVELMLEKGYTPPVYRSANIDGGYEYNFAIEDKFADRIFHL.

One can recognise an SIS domain in the interval 31–205 (VADSIMNDGI…ELMLEKGYTP (175 aa)).

The protein belongs to the UPF0309 family.

This chain is UPF0309 protein lmo0025, found in Listeria monocytogenes serovar 1/2a (strain ATCC BAA-679 / EGD-e).